The following is a 388-amino-acid chain: Ribonuclease D (388 aa).

Residues 24 to 191 form the 3'-5' exonuclease domain; it reads QYVSDEASLN…LYPQLADKLK (168 aa). An HRDC domain is found at 230–310; the sequence is TEHQLAYLKV…QTADLSNPPE (81 aa).

It belongs to the RNase D family. A divalent metal cation is required as a cofactor.

The protein resides in the cytoplasm. It catalyses the reaction Exonucleolytic cleavage that removes extra residues from the 3'-terminus of tRNA to produce 5'-mononucleotides.. In terms of biological role, exonuclease involved in the 3' processing of various precursor tRNAs. Initiates hydrolysis at the 3'-terminus of an RNA molecule and releases 5'-mononucleotides. The chain is Ribonuclease D from Shewanella sp. (strain ANA-3).